Consider the following 309-residue polypeptide: Aspartate carbamoyltransferase catalytic subunit (309 aa).

R55 and T56 together coordinate carbamoyl phosphate. K85 contributes to the L-aspartate binding site. 3 residues coordinate carbamoyl phosphate: R106, H135, and Q138. Residues R168 and R230 each contribute to the L-aspartate site. 2 residues coordinate carbamoyl phosphate: L268 and P269.

It belongs to the aspartate/ornithine carbamoyltransferase superfamily. ATCase family. In terms of assembly, heterododecamer (2C3:3R2) of six catalytic PyrB chains organized as two trimers (C3), and six regulatory PyrI chains organized as three dimers (R2).

The enzyme catalyses carbamoyl phosphate + L-aspartate = N-carbamoyl-L-aspartate + phosphate + H(+). It functions in the pathway pyrimidine metabolism; UMP biosynthesis via de novo pathway; (S)-dihydroorotate from bicarbonate: step 2/3. Its function is as follows. Catalyzes the condensation of carbamoyl phosphate and aspartate to form carbamoyl aspartate and inorganic phosphate, the committed step in the de novo pyrimidine nucleotide biosynthesis pathway. This chain is Aspartate carbamoyltransferase catalytic subunit, found in Vibrio vulnificus (strain CMCP6).